A 582-amino-acid polypeptide reads, in one-letter code: Choline kinase (582 aa).

Residues 1-36 (MVQESRPGSVRSYSVGYQARSRSSSQRRHSLTRQRS) are disordered. Ser30 carries the post-translational modification Phosphoserine; by PKA. Ser48 and Ser51 each carry phosphoserine. Thr54 carries the phosphothreonine modification. Residue Ser85 is modified to Phosphoserine; by PKA.

It belongs to the choline/ethanolamine kinase family. As to quaternary structure, monomer. Interacts with NAP1. The cofactor is Mg(2+).

Its subcellular location is the cytoplasm. It catalyses the reaction choline + ATP = phosphocholine + ADP + H(+). The enzyme catalyses ethanolamine + ATP = phosphoethanolamine + ADP + H(+). The protein operates within phospholipid metabolism; phosphatidylcholine biosynthesis; phosphocholine from choline: step 1/1. Catalyzes the committed step in the synthesis of phosphatidylcholine by the CDP-choline pathway. Also exhibits ethanolamine kinase activity but it is a poor substrate at 14% efficiency compared with choline. This chain is Choline kinase, found in Saccharomyces cerevisiae (strain ATCC 204508 / S288c) (Baker's yeast).